A 353-amino-acid polypeptide reads, in one-letter code: MTAILERRESASLWARFCEWVTSTENRLYIGWFGVLMIPTLLTATSVFIIAFIAAPPVDIDGIREPVSGSLLYGNNIISGAIIPTSNAIGLHFYPIWEAASLDEWLYNGGPYQLIVCHFFLGICSYMGREWELSFRLGMRPWIAVAYSAPVAAATAVFIIYPIGQGSFSDGMPLGISGTFNFMIVFQAEHNILMHPFHMLGVAGVFGGSLFSAMHGSLVTSSLIRETTENESANEGYKFGQEEETYNIVAAHGYFGRLIFQYASFNNSRSLHFFLAAWPVVGIWFTALGISTMAFNLNGFNFNQSVVDSQGRVINTWADIINRANLGMEVMHERNAHNFPLDLAVVEAPAVNG.

Thr2 carries the N-acetylthreonine modification. Thr2 carries the phosphothreonine modification. The next 3 membrane-spanning stretches (helical) occupy residues 29 to 46 (YIGW…TATS), 118 to 133 (HFFL…EWEL), and 142 to 156 (WIAV…AATA). Residue His118 participates in chlorophyll a binding. Position 126 (Tyr126) interacts with pheophytin a. [CaMn4O5] cluster contacts are provided by Asp170 and Glu189. A helical membrane pass occupies residues 197-218 (FHMLGVAGVFGGSLFSAMHGSL). Residue His198 participates in chlorophyll a binding. Residues His215 and 264-265 (SF) each bind a quinone. His215 lines the Fe cation pocket. His272 provides a ligand contact to Fe cation. A helical membrane pass occupies residues 274 to 288 (FLAAWPVVGIWFTAL). [CaMn4O5] cluster contacts are provided by His332, Glu333, Asp342, and Ala344. The propeptide occupies 345–353 (VVEAPAVNG).

The protein belongs to the reaction center PufL/M/PsbA/D family. PSII is composed of 1 copy each of membrane proteins PsbA, PsbB, PsbC, PsbD, PsbE, PsbF, PsbH, PsbI, PsbJ, PsbK, PsbL, PsbM, PsbT, PsbX, PsbY, PsbZ, Psb30/Ycf12, at least 3 peripheral proteins of the oxygen-evolving complex and a large number of cofactors. It forms dimeric complexes. Requires The D1/D2 heterodimer binds P680, chlorophylls that are the primary electron donor of PSII, and subsequent electron acceptors. It shares a non-heme iron and each subunit binds pheophytin, quinone, additional chlorophylls, carotenoids and lipids. D1 provides most of the ligands for the Mn4-Ca-O5 cluster of the oxygen-evolving complex (OEC). There is also a Cl(-1) ion associated with D1 and D2, which is required for oxygen evolution. The PSII complex binds additional chlorophylls, carotenoids and specific lipids. as cofactor. Tyr-161 forms a radical intermediate that is referred to as redox-active TyrZ, YZ or Y-Z. Post-translationally, C-terminally processed by CTPA; processing is essential to allow assembly of the oxygen-evolving complex and thus photosynthetic growth.

The protein resides in the plastid. The protein localises to the chloroplast thylakoid membrane. The catalysed reaction is 2 a plastoquinone + 4 hnu + 2 H2O = 2 a plastoquinol + O2. Photosystem II (PSII) is a light-driven water:plastoquinone oxidoreductase that uses light energy to abstract electrons from H(2)O, generating O(2) and a proton gradient subsequently used for ATP formation. It consists of a core antenna complex that captures photons, and an electron transfer chain that converts photonic excitation into a charge separation. The D1/D2 (PsbA/PsbD) reaction center heterodimer binds P680, the primary electron donor of PSII as well as several subsequent electron acceptors. The chain is Photosystem II protein D1 from Chlorella vulgaris (Green alga).